The chain runs to 214 residues: ATP phosphoribosyltransferase (214 aa).

This sequence belongs to the ATP phosphoribosyltransferase family. Short subfamily. Heteromultimer composed of HisG and HisZ subunits.

It localises to the cytoplasm. It carries out the reaction 1-(5-phospho-beta-D-ribosyl)-ATP + diphosphate = 5-phospho-alpha-D-ribose 1-diphosphate + ATP. It participates in amino-acid biosynthesis; L-histidine biosynthesis; L-histidine from 5-phospho-alpha-D-ribose 1-diphosphate: step 1/9. Catalyzes the condensation of ATP and 5-phosphoribose 1-diphosphate to form N'-(5'-phosphoribosyl)-ATP (PR-ATP). Has a crucial role in the pathway because the rate of histidine biosynthesis seems to be controlled primarily by regulation of HisG enzymatic activity. The sequence is that of ATP phosphoribosyltransferase from Alcanivorax borkumensis (strain ATCC 700651 / DSM 11573 / NCIMB 13689 / SK2).